The chain runs to 92 residues: Small ribosomal subunit protein uS19c (92 aa).

This sequence belongs to the universal ribosomal protein uS19 family.

It localises to the plastid. Its subcellular location is the chloroplast. Functionally, protein S19 forms a complex with S13 that binds strongly to the 16S ribosomal RNA. This Cucumis sativus (Cucumber) protein is Small ribosomal subunit protein uS19c.